The following is a 288-amino-acid chain: 4-hydroxybenzoate octaprenyltransferase (288 aa).

7 consecutive transmembrane segments (helical) span residues 38-58, 98-120, 141-161, 163-183, 213-233, 238-258, and 268-288; these read IAAQSIPSLHILIVFTAGVFL, ILFASLVGLSFLLVLTLNSMTIW, LLQVVLGAAFGWSIPMGFSAV, ESLPLVCWVLFLVNILWSVIY, LIIGILQIVMIVLLVLVGSLA, VYYIALSLSALLFIYQQKLMV, and AFLNNNYVGLILFIGIFLSYL.

This sequence belongs to the UbiA prenyltransferase family. Mg(2+) serves as cofactor.

It is found in the cell inner membrane. It carries out the reaction all-trans-octaprenyl diphosphate + 4-hydroxybenzoate = 4-hydroxy-3-(all-trans-octaprenyl)benzoate + diphosphate. It functions in the pathway cofactor biosynthesis; ubiquinone biosynthesis. Functionally, catalyzes the prenylation of para-hydroxybenzoate (PHB) with an all-trans polyprenyl group. Mediates the second step in the final reaction sequence of ubiquinone-8 (UQ-8) biosynthesis, which is the condensation of the polyisoprenoid side chain with PHB, generating the first membrane-bound Q intermediate 3-octaprenyl-4-hydroxybenzoate. The sequence is that of 4-hydroxybenzoate octaprenyltransferase from Providencia stuartii.